Consider the following 248-residue polypeptide: MAESEAKQQPETVHGEEKRLKYLDFVQVAAIYVIVCFSSLYEYAKENSGPLKPGVQTVEGTVKTVIGPVYEKFYDVPFELLMFVDRKVEASIYELERHVPSLVKRASCQAITVAQKAPELALAVASEVQRPGVVDTAKNITKNVYSKCEPTAKELCSKYEPVAEQYAVSAWRSLNRLPLFPQVAQVVVPTAAYWSEKYNQSVSYTAERGYTVALYLPLIPTERIAKVFQDGSALPTVETNGNAIPLAQ.

The protein belongs to the REF/SRPP family.

This chain is Stress-related protein (SRP), found in Vitis riparia (Frost grape).